Consider the following 334-residue polypeptide: MGRRSSDTEEESRSKRKKKHRRRSSSSSSSDSRTYSRKKGGRRPRSDSRSWSRDRQLRSHSYERRRRRRSSSSSSYGSRRKRSRSRSRGRGKPYRVQRSRSKSRTRRSRSRPRPRSHSRSSERSSHRRTRSRSRDRDRRKVRDKEKREKEKDKGKDKEVHSIKRGDSGNIKAGLEHLPPAEQAKARLQLVLEAAAKADEALKAKERSEEEAKRRKEEDQATLVEQVKRVKEIEAIESDSFVQQTFRSSKDVKKAVEPSEVQHVTAASGPASAAAEPPSTGKEIDPDSIPTAIKYQDDNSLAHPNLFIEKAEAEEKWFKRLIALRQERLMGSPVA.

The span at 1–13 (MGRRSSDTEEESR) shows a compositional bias: basic and acidic residues. Disordered stretches follow at residues 1-179 (MGRR…HLPP), 198-220 (DEALKAKERSEEEAKRRKEEDQA), and 246-290 (RSSK…SIPT). Residues 14-24 (SKRKKKHRRRS) are compositionally biased toward basic residues. The segment covering 44–62 (PRSDSRSWSRDRQLRSHSY) has biased composition (basic and acidic residues). Over residues 78-118 (SRRKRSRSRSRGRGKPYRVQRSRSKSRTRRSRSRPRPRSHS) the composition is skewed to basic residues. Basic and acidic residues-rich tracts occupy residues 132 to 166 (RSRDRDRRKVRDKEKREKEKDKGKDKEVHSIKRGD), 198 to 218 (DEALKAKERSEEEAKRRKEED), and 247 to 256 (SSKDVKKAVE). A coiled-coil region spans residues 180–236 (AEQAKARLQLVLEAAAKADEALKAKERSEEEAKRRKEEDQATLVEQVKRVKEIEAIE). Positions 265–278 (AASGPASAAAEPPS) are enriched in low complexity.

As to quaternary structure, interacts (via Arg/Ser-rich domain) with LUC7L3, RBM39 and RSF1. Post-translationally, phosphorylated.

It is found in the nucleus. The protein localises to the nucleus speckle. Its subcellular location is the cytoplasm. Plays a role in pre-mRNA splicing. Involved in both constitutive and alternative pre-mRNA splicing. May have a role in the recognition of the 3' splice site during the second step of splicing. The sequence is that of Serine/Arginine-related protein 53 (Rsrc1) from Mus musculus (Mouse).